Reading from the N-terminus, the 216-residue chain is MNLILMGLPGAGKGTQAEQIVAKYNIPHISTGDMFRAAMKAETEMGLQAKSFIDKGALVPDEVTIGIVRERLSQEDCVRGFLLDGFPRTVAQASALEEIMKDLGKKIDYVLNINVDSGLLLKRLTGRRICKECGATYHLEFNPPAKADVCDKCGGELYQRSDDNEETVANRLDVNIKQTKPLLDFYDELGYLKSINGEQDINKVFADIDVLIGGLA.

ATP is bound at residue 10–15 (GAGKGT). The tract at residues 30–59 (STGDMFRAAMKAETEMGLQAKSFIDKGALV) is NMP. AMP-binding positions include Thr-31, Arg-36, 57–59 (ALV), 85–88 (GFPR), and Gln-92. The LID stretch occupies residues 126 to 163 (GRRICKECGATYHLEFNPPAKADVCDKCGGELYQRSDD). Residue Arg-127 participates in ATP binding. Zn(2+) contacts are provided by Cys-130 and Cys-133. 136 to 137 (TY) is an ATP binding site. Cys-150 and Cys-153 together coordinate Zn(2+). Positions 160 and 171 each coordinate AMP. Residue Gln-199 coordinates ATP.

It belongs to the adenylate kinase family. Monomer.

Its subcellular location is the cytoplasm. The enzyme catalyses AMP + ATP = 2 ADP. It functions in the pathway purine metabolism; AMP biosynthesis via salvage pathway; AMP from ADP: step 1/1. Catalyzes the reversible transfer of the terminal phosphate group between ATP and AMP. Plays an important role in cellular energy homeostasis and in adenine nucleotide metabolism. The chain is Adenylate kinase from Bacillus cereus (strain G9842).